We begin with the raw amino-acid sequence, 499 residues long: Probable cytosol aminopeptidase (499 aa).

Mn(2+) is bound by residues Lys269 and Asp274. Lys281 is a catalytic residue. Mn(2+) is bound by residues Asp292, Asp351, and Glu353. The active site involves Arg355.

The protein belongs to the peptidase M17 family. Mn(2+) is required as a cofactor.

The protein localises to the cytoplasm. The catalysed reaction is Release of an N-terminal amino acid, Xaa-|-Yaa-, in which Xaa is preferably Leu, but may be other amino acids including Pro although not Arg or Lys, and Yaa may be Pro. Amino acid amides and methyl esters are also readily hydrolyzed, but rates on arylamides are exceedingly low.. The enzyme catalyses Release of an N-terminal amino acid, preferentially leucine, but not glutamic or aspartic acids.. Presumably involved in the processing and regular turnover of intracellular proteins. Catalyzes the removal of unsubstituted N-terminal amino acids from various peptides. This is Probable cytosol aminopeptidase from Actinobacillus pleuropneumoniae serotype 3 (strain JL03).